The chain runs to 125 residues: Small ribosomal subunit protein uS13 (125 aa).

This sequence belongs to the universal ribosomal protein uS13 family. In terms of assembly, part of the 30S ribosomal subunit. Forms a loose heterodimer with protein S19. Forms two bridges to the 50S subunit in the 70S ribosome.

Functionally, located at the top of the head of the 30S subunit, it contacts several helices of the 16S rRNA. In the 70S ribosome it contacts the 23S rRNA (bridge B1a) and protein L5 of the 50S subunit (bridge B1b), connecting the 2 subunits; these bridges are implicated in subunit movement. Contacts the tRNAs in the A and P-sites. In Rickettsia felis (strain ATCC VR-1525 / URRWXCal2) (Rickettsia azadi), this protein is Small ribosomal subunit protein uS13.